The primary structure comprises 343 residues: Holliday junction branch migration complex subunit RuvB (343 aa).

Residues 1–181 (MDRIIDSAAT…FGIVQRLEFY (181 aa)) form a large ATPase domain (RuvB-L) region. Residues Ile-20, Arg-21, Gly-62, Lys-65, Thr-66, Thr-67, 128 to 130 (EDF), Arg-171, Tyr-181, and Arg-218 each bind ATP. Thr-66 serves as a coordination point for Mg(2+). The tract at residues 182 to 252 (SPEDLARIVR…VAQAAMQMLK (71 aa)) is small ATPAse domain (RuvB-S). The head domain (RuvB-H) stretch occupies residues 255-343 (QGGFDELDRR…SAFTDPEDLF (89 aa)). Residues Arg-291, Arg-310, and Arg-315 each contribute to the DNA site.

This sequence belongs to the RuvB family. Homohexamer. Forms an RuvA(8)-RuvB(12)-Holliday junction (HJ) complex. HJ DNA is sandwiched between 2 RuvA tetramers; dsDNA enters through RuvA and exits via RuvB. An RuvB hexamer assembles on each DNA strand where it exits the tetramer. Each RuvB hexamer is contacted by two RuvA subunits (via domain III) on 2 adjacent RuvB subunits; this complex drives branch migration. In the full resolvosome a probable DNA-RuvA(4)-RuvB(12)-RuvC(2) complex forms which resolves the HJ.

It localises to the cytoplasm. The enzyme catalyses ATP + H2O = ADP + phosphate + H(+). Its function is as follows. The RuvA-RuvB-RuvC complex processes Holliday junction (HJ) DNA during genetic recombination and DNA repair, while the RuvA-RuvB complex plays an important role in the rescue of blocked DNA replication forks via replication fork reversal (RFR). RuvA specifically binds to HJ cruciform DNA, conferring on it an open structure. The RuvB hexamer acts as an ATP-dependent pump, pulling dsDNA into and through the RuvAB complex. RuvB forms 2 homohexamers on either side of HJ DNA bound by 1 or 2 RuvA tetramers; 4 subunits per hexamer contact DNA at a time. Coordinated motions by a converter formed by DNA-disengaged RuvB subunits stimulates ATP hydrolysis and nucleotide exchange. Immobilization of the converter enables RuvB to convert the ATP-contained energy into a lever motion, pulling 2 nucleotides of DNA out of the RuvA tetramer per ATP hydrolyzed, thus driving DNA branch migration. The RuvB motors rotate together with the DNA substrate, which together with the progressing nucleotide cycle form the mechanistic basis for DNA recombination by continuous HJ branch migration. Branch migration allows RuvC to scan DNA until it finds its consensus sequence, where it cleaves and resolves cruciform DNA. This Xylella fastidiosa (strain Temecula1 / ATCC 700964) protein is Holliday junction branch migration complex subunit RuvB.